Reading from the N-terminus, the 2241-residue chain is Large tegument protein deneddylase (2241 aa).

A deubiquitination activity region spans residues 1–238; that stretch reads MKVTQASCHQ…IDLTGVVRES (238 aa). A Peptidase C76 domain is found at 4–226; that stretch reads TQASCHQGDI…AARLVSTYRD (223 aa). Catalysis depends on residues cysteine 24, aspartate 160, and histidine 162. Residues 239-314 form a disordered region; that stretch reads ADTAATTTTA…STTSKTLATA (76 aa). The segment covering 240-250 has biased composition (low complexity); the sequence is DTAATTTTAAP. Positions 251-268 are enriched in pro residues; it reads SLPPLPDPIVDPGCPPGV. Residues 304 to 314 are compositionally biased toward low complexity; that stretch reads PSTTSKTLATA. Residues 327-331 are interaction with inner tegument protein; sequence SSAVP. Disordered regions lie at residues 1187 to 1230 and 2118 to 2152; these read MTET…PPAD and PIAR…DTSR. 2 stretches are compositionally biased toward basic and acidic residues: residues 1190 to 1199 and 2142 to 2152; these read TSERLDRSLR and QIDHAQDDTSR.

It belongs to the herpesviridae large tegument protein family. In terms of assembly, interacts with host CUL1 and CUL4A; these interactions inhibit the E3 ligase activity of cullins. Interacts with inner tegument protein. Interacts with capsid vertex specific component CVC2. Interacts with the major capsid protein/MCP.

It localises to the virion tegument. It is found in the host cytoplasm. The protein localises to the host nucleus. The enzyme catalyses Thiol-dependent hydrolysis of ester, thioester, amide, peptide and isopeptide bonds formed by the C-terminal Gly of ubiquitin (a 76-residue protein attached to proteins as an intracellular targeting signal).. Large tegument protein that plays multiple roles in the viral cycle. During viral entry, remains associated with the capsid while most of the tegument is detached and participates in the capsid transport toward the host nucleus. Plays a role in the routing of the capsid at the nuclear pore complex and subsequent uncoating. Within the host nucleus, acts as a deneddylase and promotes the degradation of nuclear CRLs (cullin-RING ubiquitin ligases) and thereby stabilizes nuclear CRL substrates, while cytoplasmic CRLs remain unaffected. These modifications prevent host cell cycle S-phase progression and create a favorable environment allowing efficient viral genome replication. Participates later in the secondary envelopment of capsids. Indeed, plays a linker role for the association of the outer viral tegument to the capsids together with the inner tegument protein. This is Large tegument protein deneddylase (UL48) from Homo sapiens (Human).